The chain runs to 244 residues: Robin (244 aa).

In Acanthamoeba polyphaga (Amoeba), this protein is Robin.